The chain runs to 243 residues: Peptidyl-tRNA hydrolase (243 aa).

Y14 lines the tRNA pocket. H19 functions as the Proton acceptor in the catalytic mechanism. Residues F64, N66, and N112 each coordinate tRNA. The disordered stretch occupies residues 188 to 243; that stretch reads GGKAEEEKPRKDNKTTEKKPAGQSHIHQARNHNQPKVLTTGPMADILKKMFGNKGE. The span at 190–207 shows a compositional bias: basic and acidic residues; sequence KAEEEKPRKDNKTTEKKP.

The protein belongs to the PTH family. In terms of assembly, monomer.

It localises to the cytoplasm. It carries out the reaction an N-acyl-L-alpha-aminoacyl-tRNA + H2O = an N-acyl-L-amino acid + a tRNA + H(+). Functionally, hydrolyzes ribosome-free peptidyl-tRNAs (with 1 or more amino acids incorporated), which drop off the ribosome during protein synthesis, or as a result of ribosome stalling. Catalyzes the release of premature peptidyl moieties from peptidyl-tRNA molecules trapped in stalled 50S ribosomal subunits, and thus maintains levels of free tRNAs and 50S ribosomes. This Rhizobium leguminosarum bv. trifolii (strain WSM2304) protein is Peptidyl-tRNA hydrolase.